Consider the following 185-residue polypeptide: Dual-action ribosomal maturation protein DarP (185 aa).

The interval 1-22 (MWKNGAMRGCNKETGEFLGPSR) is disordered.

This sequence belongs to the DarP family.

It localises to the cytoplasm. Functionally, member of a network of 50S ribosomal subunit biogenesis factors which assembles along the 30S-50S interface, preventing incorrect 23S rRNA structures from forming. Promotes peptidyl transferase center (PTC) maturation. This chain is Dual-action ribosomal maturation protein DarP, found in Xylella fastidiosa (strain 9a5c).